The following is a 145-amino-acid chain: Large-conductance mechanosensitive channel (145 aa).

2 helical membrane passes run 14-34 (VIDL…VDSL) and 81-101 (GIFI…FLMV).

This sequence belongs to the MscL family. Homopentamer.

It localises to the cell inner membrane. Functionally, channel that opens in response to stretch forces in the membrane lipid bilayer. May participate in the regulation of osmotic pressure changes within the cell. This chain is Large-conductance mechanosensitive channel, found in Pelobacter propionicus (strain DSM 2379 / NBRC 103807 / OttBd1).